A 401-amino-acid chain; its full sequence is Argininosuccinate synthase (401 aa).

ATP is bound by residues 7-15 (AYSGGLDTS) and alanine 34. Residues tyrosine 85 and serine 90 each contribute to the L-citrulline site. ATP is bound at residue glycine 115. L-aspartate is bound by residues threonine 117, asparagine 121, and aspartate 122. Asparagine 121 lines the L-citrulline pocket. L-citrulline contacts are provided by arginine 125, serine 174, serine 183, glutamate 259, and tyrosine 271.

The protein belongs to the argininosuccinate synthase family. Type 1 subfamily. In terms of assembly, homotetramer.

It localises to the cytoplasm. It catalyses the reaction L-citrulline + L-aspartate + ATP = 2-(N(omega)-L-arginino)succinate + AMP + diphosphate + H(+). It functions in the pathway amino-acid biosynthesis; L-arginine biosynthesis; L-arginine from L-ornithine and carbamoyl phosphate: step 2/3. This chain is Argininosuccinate synthase, found in Desulfitobacterium hafniense (strain DSM 10664 / DCB-2).